The primary structure comprises 275 residues: Putative methylglyoxal reductase DkgA (275 aa).

Catalysis depends on Y51, which acts as the Proton donor. H107 serves as a coordination point for substrate. 187–241 contacts NADP(+); the sequence is SPLAQGGEGVFDQKVIRELADKYGKTPAQIVIRWHLDCGLVVIPKSVTPSRIAEN.

This sequence belongs to the aldo/keto reductase family. Monomer.

The protein resides in the cytoplasm. The catalysed reaction is hydroxyacetone + NADP(+) = methylglyoxal + NADPH + H(+). Aldo-keto reductase that significantly contributes to cellular methylglyoxal detoxification by catalyzing the NADPH-dependent conversion of methylglyoxal to acetol. This chain is Putative methylglyoxal reductase DkgA, found in Salmonella typhi.